Reading from the N-terminus, the 511-residue chain is 2,3-bisphosphoglycerate-independent phosphoglycerate mutase (511 aa).

Position 12 (Asp-12) interacts with Mn(2+). Position 36 is a phosphotyrosine (Tyr-36). Ser-62 lines the Mn(2+) pocket. Ser-62 serves as the catalytic Phosphoserine intermediate. Substrate is bound by residues His-123, 153–154 (RD), Arg-185, Arg-191, 261–264 (RPDR), and Lys-336. Mn(2+) contacts are provided by Asp-403, His-407, Asp-444, His-445, and His-462.

The protein belongs to the BPG-independent phosphoglycerate mutase family. Monomer. It depends on Mn(2+) as a cofactor.

It carries out the reaction (2R)-2-phosphoglycerate = (2R)-3-phosphoglycerate. Its pathway is carbohydrate degradation; glycolysis; pyruvate from D-glyceraldehyde 3-phosphate: step 3/5. Its function is as follows. Essential for rapid growth and for sporulation. Catalyzes the interconversion of 2-phosphoglycerate and 3-phosphoglycerate. The sequence is that of 2,3-bisphosphoglycerate-independent phosphoglycerate mutase from Bacillus pumilus (strain SAFR-032).